The following is a 163-amino-acid chain: Neurotrophin-3 (163 aa).

The signal sequence occupies residues 1–3; the sequence is IQS. A propeptide spanning residues 4–119 is cleaved from the precursor; it reads TSMDQGILTE…VLNRTSRRKR (116 aa). An N-linked (GlcNAc...) asparagine glycan is attached at asparagine 112. Residues 112–132 are disordered; it reads NRTSRRKREGKSHRGEYSVCD. Residues 123–132 are compositionally biased toward basic and acidic residues; it reads SHRGEYSVCD.

The protein belongs to the NGF-beta family.

The protein localises to the secreted. Seems to promote the survival of visceral and proprioceptive sensory neurons. This Exiliboa placata (Oaxacan dwarf boa) protein is Neurotrophin-3 (NTF3).